Reading from the N-terminus, the 506-residue chain is 2-isopropylmalate synthase (506 aa).

The 262-residue stretch at 6-267 (IIVFDTTLRD…YTDIVTKEIY (262 aa)) folds into the Pyruvate carboxyltransferase domain. Mn(2+) contacts are provided by aspartate 15, histidine 201, histidine 203, and asparagine 237. Residues 391 to 506 (SIQTLSTSSC…LNSYLSMKNR (116 aa)) form a regulatory domain region.

It belongs to the alpha-IPM synthase/homocitrate synthase family. LeuA type 1 subfamily. As to quaternary structure, homodimer. Mn(2+) serves as cofactor.

The protein localises to the cytoplasm. The enzyme catalyses 3-methyl-2-oxobutanoate + acetyl-CoA + H2O = (2S)-2-isopropylmalate + CoA + H(+). Its pathway is amino-acid biosynthesis; L-leucine biosynthesis; L-leucine from 3-methyl-2-oxobutanoate: step 1/4. Its function is as follows. Catalyzes the condensation of the acetyl group of acetyl-CoA with 3-methyl-2-oxobutanoate (2-ketoisovalerate) to form 3-carboxy-3-hydroxy-4-methylpentanoate (2-isopropylmalate). This is 2-isopropylmalate synthase from Campylobacter fetus subsp. fetus (strain 82-40).